A 140-amino-acid polypeptide reads, in one-letter code: Ribosome-binding factor A (140 aa).

Residues 118-133 are compositionally biased toward basic and acidic residues; sequence DEAKQQKHNGKDKTDT. Residues 118-140 are disordered; sequence DEAKQQKHNGKDKTDTADSEGEE.

Belongs to the RbfA family. In terms of assembly, monomer. Binds 30S ribosomal subunits, but not 50S ribosomal subunits or 70S ribosomes.

The protein resides in the cytoplasm. Functionally, one of several proteins that assist in the late maturation steps of the functional core of the 30S ribosomal subunit. Associates with free 30S ribosomal subunits (but not with 30S subunits that are part of 70S ribosomes or polysomes). Required for efficient processing of 16S rRNA. May interact with the 5'-terminal helix region of 16S rRNA. In Shewanella woodyi (strain ATCC 51908 / MS32), this protein is Ribosome-binding factor A.